The primary structure comprises 449 residues: Cytochrome P450 2E1 (449 aa).

Substrate is bound at residue 254-259 (FAGTET). Cys-393 is a heme binding site.

Belongs to the cytochrome P450 family. As to quaternary structure, interacts with chaperones HSP70 and HSP90; this interaction is required for initial targeting to mitochondria. Heme is required as a cofactor.

Its subcellular location is the endoplasmic reticulum membrane. The protein localises to the microsome membrane. It is found in the mitochondrion inner membrane. The enzyme catalyses an organic molecule + reduced [NADPH--hemoprotein reductase] + O2 = an alcohol + oxidized [NADPH--hemoprotein reductase] + H2O + H(+). It carries out the reaction (5Z,8Z,11Z)-eicosatrienoate + reduced [NADPH--hemoprotein reductase] + O2 = 19-hydroxy-(5Z,8Z,11Z)-eicosatrienoate + oxidized [NADPH--hemoprotein reductase] + H2O + H(+). The catalysed reaction is (5Z,8Z,11Z,14Z,17Z)-eicosapentaenoate + reduced [NADPH--hemoprotein reductase] + O2 = 19-hydroxy-(5Z,8Z,11Z,14Z,17Z)-eicosapentaenoate + oxidized [NADPH--hemoprotein reductase] + H2O + H(+). It catalyses the reaction (4Z,7Z,10Z,13Z,16Z,19Z)-docosahexaenoate + reduced [NADPH--hemoprotein reductase] + O2 = 21-hydroxy-(4Z,7Z,10Z,13Z,16Z,19Z)-docosahexaenoate + oxidized [NADPH--hemoprotein reductase] + H2O + H(+). The enzyme catalyses dodecanoate + reduced [NADPH--hemoprotein reductase] + O2 = 11-hydroxydodecanoate + oxidized [NADPH--hemoprotein reductase] + H2O + H(+). It carries out the reaction tetradecanoate + reduced [NADPH--hemoprotein reductase] + O2 = 13-hydroxytetradecanoate + oxidized [NADPH--hemoprotein reductase] + H2O + H(+). The catalysed reaction is 4-nitrophenol + NADPH + O2 + H(+) = 4-nitrocatechol + NADP(+) + H2O. It functions in the pathway lipid metabolism; fatty acid metabolism. The omega-1 hydroxylase activity is stimulated by cytochrome b5. Its function is as follows. A cytochrome P450 monooxygenase involved in the metabolism of fatty acids. Mechanistically, uses molecular oxygen inserting one oxygen atom into a substrate, and reducing the second into a water molecule, with two electrons provided by NADPH via cytochrome P450 reductase (NADPH--hemoprotein reductase). Catalyzes the hydroxylation of carbon-hydrogen bonds. Hydroxylates fatty acids specifically at the omega-1 position displaying the highest catalytic activity for saturated fatty acids. May be involved in the oxidative metabolism of xenobiotics. The polypeptide is Cytochrome P450 2E1 (CYP2E1) (Macaca fascicularis (Crab-eating macaque)).